A 265-amino-acid chain; its full sequence is Metal-activated transcriptional activator protein AMT1 (265 aa).

A DNA-binding region (copper-fist) is located at residues 1–40 (MVVINGVKYACDSCIKSHKAAQCEHNDRPLKILKPRGRPP). Residues Cys-11, Cys-14, Cys-23, and His-25 each coordinate Zn(2+). The tract at residues 103-129 (RRKRTQKSNKKDNLSINSPTNNSPSPA) is disordered. The span at 119–128 (NSPTNNSPSP) shows a compositional bias: low complexity.

Its subcellular location is the nucleus. In terms of biological role, trans-acting regulatory protein that activates transcription of the MT genes (metallothionein) in response to copper or silver ions. The chain is Metal-activated transcriptional activator protein AMT1 (AMT1) from Candida glabrata (strain ATCC 2001 / BCRC 20586 / JCM 3761 / NBRC 0622 / NRRL Y-65 / CBS 138) (Yeast).